The following is a 296-amino-acid chain: 4-hydroxybenzoate octaprenyltransferase (296 aa).

A run of 8 helical transmembrane segments spans residues 28–48 (PIGI…AGKG), 52–72 (LINI…GCVI), 102–122 (ALVF…LTNA), 146–166 (YYPQ…AFTA), 169–189 (GDLP…TVGY), 219–239 (VIIL…GARF), 241–261 (LGGW…WEFW), and 275–295 (FLHN…DYAF).

Belongs to the UbiA prenyltransferase family. It depends on Mg(2+) as a cofactor.

The protein localises to the cell inner membrane. It catalyses the reaction all-trans-octaprenyl diphosphate + 4-hydroxybenzoate = 4-hydroxy-3-(all-trans-octaprenyl)benzoate + diphosphate. It functions in the pathway cofactor biosynthesis; ubiquinone biosynthesis. Functionally, catalyzes the prenylation of para-hydroxybenzoate (PHB) with an all-trans polyprenyl group. Mediates the second step in the final reaction sequence of ubiquinone-8 (UQ-8) biosynthesis, which is the condensation of the polyisoprenoid side chain with PHB, generating the first membrane-bound Q intermediate 3-octaprenyl-4-hydroxybenzoate. The sequence is that of 4-hydroxybenzoate octaprenyltransferase from Pseudomonas fluorescens (strain SBW25).